A 968-amino-acid polypeptide reads, in one-letter code: Bifunctional glyoxylate cycle protein (968 aa).

Residues 1-443 (MSSAAKNFYQ…AVASQDEEIL (443 aa)) are isocitrate lyase. Residues 444–968 (SLTAQNVAGD…AYDRLVSEGY (525 aa)) form a malate synthase region. R601 functions as the Proton acceptor in the catalytic mechanism. D881 serves as the catalytic Proton donor.

In the N-terminal section; belongs to the isocitrate lyase/PEP mutase superfamily. Isocitrate lyase family. This sequence in the C-terminal section; belongs to the malate synthase family. In terms of tissue distribution, intestinal and body wall muscle cells.

It catalyses the reaction D-threo-isocitrate = glyoxylate + succinate. The catalysed reaction is glyoxylate + acetyl-CoA + H2O = (S)-malate + CoA + H(+). It participates in carbohydrate metabolism; glyoxylate cycle; (S)-malate from isocitrate: step 1/2. It functions in the pathway carbohydrate metabolism; glyoxylate cycle; (S)-malate from isocitrate: step 2/2. The sequence is that of Bifunctional glyoxylate cycle protein (icl-1) from Caenorhabditis elegans.